The sequence spans 230 residues: Orotidine 5'-phosphate decarboxylase (230 aa).

Residues Asp-10, Lys-32, 59–68, Thr-119, Arg-180, Gln-189, Gly-209, and Arg-210 each bind substrate; that span reads DLKYHDIPNT. Lys-61 acts as the Proton donor in catalysis.

The protein belongs to the OMP decarboxylase family. Type 1 subfamily. In terms of assembly, homodimer.

The catalysed reaction is orotidine 5'-phosphate + H(+) = UMP + CO2. The protein operates within pyrimidine metabolism; UMP biosynthesis via de novo pathway; UMP from orotate: step 2/2. Its function is as follows. Catalyzes the decarboxylation of orotidine 5'-monophosphate (OMP) to uridine 5'-monophosphate (UMP). This Haemophilus influenzae (strain ATCC 51907 / DSM 11121 / KW20 / Rd) protein is Orotidine 5'-phosphate decarboxylase.